The chain runs to 131 residues: mRNA stability protein IGO2 (131 aa).

Residues 1–13 (MSEDLSPTSSRVD) show a composition bias toward polar residues. Residues 1–26 (MSEDLSPTSSRVDLSNPHGFTKEGVD) form a disordered region. An N-acetylserine modification is found at serine 2. Phosphoserine is present on residues serine 6, serine 63, serine 108, and serine 119. The interval 81–131 (VNNSSNNLPVTNPSGLRESIIRRRMSSSSGGDSISRQGSISSGPPPRSPNK) is disordered. The span at 106–122 (SSSSGGDSISRQGSISS) shows a compositional bias: low complexity.

This sequence belongs to the endosulfine family. Post-translationally, phosphorylated by RIM15.

The protein localises to the cytoplasm. It localises to the nucleus. Its function is as follows. Required for TORC1 to properly control gene expression and chronological life span. Plays an essential role in initiation of the G0 program by preventing the degradation of specific nutrient-regulated mRNAs via the 5'-3' mRNA decay pathway. In Saccharomyces cerevisiae (strain ATCC 204508 / S288c) (Baker's yeast), this protein is mRNA stability protein IGO2 (IGO2).